The primary structure comprises 246 residues: Carboxymethylenebutenolidase homolog (246 aa).

Catalysis depends on residues Cys-132, Asp-179, and His-212.

It belongs to the dienelactone hydrolase family.

It localises to the cytoplasm. Its subcellular location is the cytosol. Functionally, cysteine hydrolase. The polypeptide is Carboxymethylenebutenolidase homolog (cmbl) (Xenopus tropicalis (Western clawed frog)).